The following is a 166-amino-acid chain: Short form salivary protein D7R1 (166 aa).

The N-terminal stretch at 1–21 (MFRKVFSVALVTCGLLVIVQA) is a signal peptide.

The protein belongs to the PBP/GOBP family. As to quaternary structure, interacts with host coagulation factor XII (F12) (inactive and activated) (via amino acids 1-77). Interacts with host high molecular weight kininogen (KNG1) (via amino acids 402-532). Female salivary gland (at protein level).

The protein resides in the secreted. With respect to regulation, zn(2+) modulates binding to host coagulation factor XII (F12) and high molecular weight kininogen (KNG1). Functionally, salivary protein with anticoagulant activity that targets the intrinsic blood coagulation pathway in the host. Inhibits activation of the host plasma contact system by preventing the reciprocal activation of host coagulation factor XII (F12) and prekallikrein (KLKB1). Attenuates generation of bradykinin in host plasma. May bind and sequester different mediators involved in the host response, such as serotonin and histamine. The polypeptide is Short form salivary protein D7R1 (Anopheles stephensi (Indo-Pakistan malaria mosquito)).